A 129-amino-acid chain; its full sequence is ATP synthase epsilon chain (129 aa).

Belongs to the ATPase epsilon chain family. In terms of assembly, F-type ATPases have 2 components, CF(1) - the catalytic core - and CF(0) - the membrane proton channel. CF(1) has five subunits: alpha(3), beta(3), gamma(1), delta(1), epsilon(1). CF(0) has three main subunits: a, b and c.

It is found in the cell inner membrane. Functionally, produces ATP from ADP in the presence of a proton gradient across the membrane. The chain is ATP synthase epsilon chain from Campylobacter concisus (strain 13826).